Reading from the N-terminus, the 583-residue chain is MVFKVSTVSTSPIDGQKPGTSGLRKKVKVFKQPNYLENFVQATFNALTAEKVKGATLVVSGDGRYYSKDAVQIIIKMAAANGVRRVWVGKNTLLSTPAVSAVIRERSGADGSKATGAFILTASHNPGGPTEDFGIKYNMENGGPAPESITDKIYENTKTIKEYPIAQDLPNVDISAVGVTSFEGPEGKFDVEVFDPADDYVKLMKSIFDFEAIRKLLSSPKFTFCYDALHGVAGAYAHRIFVEELGAQESALLNCTPKEDFGGGHPDPNLTYAKELVARMGLGKSDTGGEPPEFGAAADGDADRNMILGKRFFVTPSDSVAIIAANAIGAIPYFSSGLKGVARSMPTSAALDVVAKSLNLKFFEVPTGWKFFGNLMDAGMCSVCGEESFGTGSDHIREKDGIWAVLAWMSILAHKNKGNIDGNAKLVSVEDIVRQHWATYGRHYYTRYDYENVDAGKAKELMEHLVKLQSSIPEVNKIVKGIRSDVASVASADEFEYKDPVDGSISKHQGIRYLFEDGSRLVFRLSGTGSEGATIRLYIEQYEKDASKTGRESQEALSPLVDLALKLSKMEEFTGRSAPTVIT.

Residues Arg24 and Ser123 each coordinate alpha-D-glucose 1,6-bisphosphate. Ser123 acts as the Phosphoserine intermediate in catalysis. The Mg(2+) site is built by Ser123, Asp299, Asp301, and Asp303. Residue Ser123 is modified to Phosphoserine. Residues Asp303, Arg304, Thr367, Glu386, Ser388, and Lys399 each contribute to the alpha-D-glucose 1,6-bisphosphate site.

It belongs to the phosphohexose mutase family. As to quaternary structure, monomer. Mg(2+) is required as a cofactor.

It localises to the cytoplasm. It carries out the reaction alpha-D-glucose 1-phosphate = alpha-D-glucose 6-phosphate. The enzyme catalyses O-phospho-L-seryl-[protein] + alpha-D-glucose 1-phosphate = alpha-D-glucose 1,6-bisphosphate + L-seryl-[protein]. The catalysed reaction is alpha-D-glucose 1,6-bisphosphate + L-seryl-[protein] = O-phospho-L-seryl-[protein] + alpha-D-glucose 6-phosphate. In terms of biological role, catalyzes the reversible isomerization of alpha-D-glucose 1-phosphate to alpha-D-glucose 6-phosphate. The mechanism proceeds via the intermediate compound alpha-D-glucose 1,6-bisphosphate. This enzyme participates in both the breakdown and synthesis of glucose. The sequence is that of Probable phosphoglucomutase, cytoplasmic 1 from Arabidopsis thaliana (Mouse-ear cress).